Here is an 807-residue protein sequence, read N- to C-terminus: cAMP-regulated phosphoprotein 21 (807 aa).

Positions 1 to 127 (MSEQGGLTPT…KNREKLSERP (127 aa)) are disordered. Ser2 carries the N-acetylserine modification. Phosphoserine is present on Ser32. A coiled-coil region spans residues 32–57 (SLDEEEKLELQRRLAAQNQERRKSKS). Residue Ser55 is modified to Phosphoserine; by PKA. A compositionally biased stretch (polar residues) spans 89–98 (IHLQLSSFPS). The span at 101 to 127 (EEDKSRKDDSEREKEKDKNREKLSERP) shows a compositional bias: basic and acidic residues. At Ser133 the chain carries Phosphoserine. One can recognise an R3H domain in the interval 163 to 226 (RMILLKMEQE…SVIINKTSST (64 aa)). Positions 227–298 (RIPEQRFCEH…VRERIFAHDS (72 aa)) constitute an SUZ domain. The tract at residues 245–282 (SQKRFILKRDNSSIDKEDNQNRMHPFRDDRRSKSIEER) is disordered. Phosphoserine occurs at positions 265 and 298. Disordered regions lie at residues 328–434 (LFRA…TSSV), 474–536 (GSIL…QPQM), 552–576 (SQLS…YPAS), and 595–627 (QLST…QQPP). Over residues 337 to 348 (GRTSGSRQSSSE) the composition is skewed to low complexity. Over residues 349-358 (TELRWPDHQR) the composition is skewed to basic and acidic residues. The segment covering 359 to 380 (AWSSTDSDSSNRNLKPTMTKTA) has biased composition (polar residues). A phosphoserine mark is found at Ser361 and Ser381. Low complexity predominate over residues 401-421 (GKLSKTGSESSSSAGSSGSLS). Over residues 422–434 (RTHPQSTALTSSV) the composition is skewed to polar residues. Pro residues predominate over residues 514-524 (QQPPQQQPSPQ). Positions 525–535 (PQQQVQASQPQ) are enriched in low complexity. Polar residues-rich tracts occupy residues 552–563 (SQLSMSRQSSGD) and 595–613 (QLST…QQVL). Phosphoserine is present on Ser557. Arg650 carries the post-translational modification Asymmetric dimethylarginine.

In terms of assembly, interacts with CALM1. Post-translationally, phosphorylation of isoform 2 at Ser-55 is enhanced upon dopamine D1 receptor activation and favors interaction with CALM1. Methylated by CARM1 at Arg-650 in immature thymocytes. As to expression, present at high levels in thymus and low levels in brain. In thymus, isoform 1 is specifically found in immature thymocytes (at protein level).

The protein localises to the cytoplasm. Functionally, may act as a competitive inhibitor of calmodulin-dependent enzymes such as calcineurin in neurons. The sequence is that of cAMP-regulated phosphoprotein 21 (Arpp21) from Mus musculus (Mouse).